Here is a 91-residue protein sequence, read N- to C-terminus: Acylphosphatase (91 aa).

Residues 3–89 (AKHLILSGRV…PAEPGFVKRA (87 aa)) form the Acylphosphatase-like domain. Active-site residues include Arg18 and Asn36.

Belongs to the acylphosphatase family.

The catalysed reaction is an acyl phosphate + H2O = a carboxylate + phosphate + H(+). This chain is Acylphosphatase (acyP), found in Acidiphilium cryptum (strain JF-5).